The primary structure comprises 1643 residues: MANVSSFQRKIAKIKIGIASPQSILEASNGEVKKPETLNHRTGKPEKDGLFCEKIFGPVKDYECACGKYKGKKYEGTVCERCGVKVESKEARRRKIGHIELATPISHIWYLKSSPSILSIILNIGVKDLENIIYYGSKRVIERAYLTLPGPENENLGYLPGEILYQREYEIYDEYLDLRVEPAVKIVSVKGMPVADIDGKVEIKSELTHTERELNWIIIRDDTGVERKYPVFEGSSIMVENGQEVEKGTPLADRFLFEEDYLTQKEYSLFLEYYPGSIEVERDIERDTPIVVITDIDKRFAKRIDKKIGDILLEDEARAYEEVMKVLNSKIKEERENVIDKELVSEIEFPEKKFEKGTKITQEVLNELQEFGVKDLVAKEEDGTEKIFQINRYEKFEYGYGAEAIQKLLTKIDLEVLKARLESELEKLDRKSQKSVKILRRLKLVKDFIKSGNQPEWLITNIIPVIPPDLRPLIQIDGGRFAATDLNDLYRKVINRNNRLRKLLEMEAPEIIVRNEKRILQQAVDSLFYNGRVGKPMTDRNRRPLRSLTDLLKGKKGRFRRNLLGKRVDYSGRAVIAVGPDLKIHECGLPKKMALELFKPFVLAELLRDSNVASKSARKFKKTIIEKEMPEAWEVLEEVIKGHPVLLNRAPTLHRVSIQAFIPKLIEGNAIRLHPLVCPPFNADFDGDQMAIHIPLSNIAQAESKFLMLSRYNIISPANGKPLSMPGKDIIAGAYYLTMHEDEKFKNLKVPTKVSELGKNGYVKHIFSEDLEATYAYEYLKIVDSDIYLQDGKLIWKKSDLPLHEPVAFRYKDGSILKTTIGKIIFNEEVPEDLRDYTQKMDKKNLKELIFNTFEKHGIDRTADLLDSIKDFGFHYATLSGLTISIRDVLVSPKREELIEESKGEVLRIESLYEEGYLTDNERYKEIIKIWESATAKVTEETAKTYRKYTFNPIWMMIESGARGNIDQLKQLAGMRGLMADPSGKIIEVPITSNFKNGLSELEFFTSTHGSRKGSADTALRTSTAGYLTRRLVDVAQSITITEEDCGTDKGIEARELWADDSKIENLSDFLFGRVLAKDVLDPETKEVIFNPQADKKYERGIILKEKDAQFLANYVKEIPVSKEKTIKIEDMPKDSYLESLEDVQVEGKVLIKKGEEITEEAIEEAFLHGIQKLDVKEYTAVDYVYSGEDLKVEIDGKTVTLLKYQERIDLKVSKVLEKHGIKTVTVRPSIFIRSPLTCESENGLCAKCYGMDLSNYKLVNRGEAVGIIAAQSIGEPGTQLTMRTFHTGGIATTSDITQGLPRAEELFEARKKTKGPEGEFSKTKGIVRAIERDTENKRGRRLKIIIENSDGELESYEADYRTKAVVEEGDKVLAGQRLTTGNIKPRNILKELGVGPLANYLLSEIKKIYAEQGVDIHDKHFEIIIRQMINKVEIIDGGDTDFMPGDLVSYGKVQKINEEILEENSYITENRELVVGKKLAKRVIIPAEDEEEEEDKIFEQGTEITEEILNQIIETNIKEIEVYEEYKEITTEEGKTHLVGTSKKYLINPKDTIKYERRLLRITKASLEREGWLSAASFQQTVQILTEAAIEGKVDRLKGLKENVIVGQPIPAGTGLKLYADQNYEVVQPEKEAEAAQEKSVG.

Positions 64, 66, 79, and 82 each coordinate Zn(2+). 3 residues coordinate Mg(2+): Asp684, Asp686, and Asp688. 4 residues coordinate Zn(2+): Cys1046, Cys1239, Cys1246, and Cys1249.

Belongs to the RNA polymerase beta' chain family. In terms of assembly, the RNAP catalytic core consists of 2 alpha, 1 beta, 1 beta' and 1 omega subunit. When a sigma factor is associated with the core the holoenzyme is formed, which can initiate transcription. Mg(2+) serves as cofactor. Zn(2+) is required as a cofactor.

It catalyses the reaction RNA(n) + a ribonucleoside 5'-triphosphate = RNA(n+1) + diphosphate. In terms of biological role, DNA-dependent RNA polymerase catalyzes the transcription of DNA into RNA using the four ribonucleoside triphosphates as substrates. This chain is DNA-directed RNA polymerase subunit beta', found in Petrotoga mobilis (strain DSM 10674 / SJ95).